We begin with the raw amino-acid sequence, 190 residues long: Dirigent protein 15 (190 aa).

A signal peptide spans 1 to 19; sequence MKSTLIIFFTLCLSMAVMA. Residues Asn-63 and Asn-128 are each glycosylated (N-linked (GlcNAc...) asparagine).

The protein belongs to the plant dirigent protein family. As to quaternary structure, homodimer.

The protein resides in the secreted. It is found in the extracellular space. The protein localises to the apoplast. Dirigent proteins impart stereoselectivity on the phenoxy radical-coupling reaction, yielding optically active lignans from two molecules of coniferyl alcohol in the biosynthesis of lignans, flavonolignans, and alkaloids and thus plays a central role in plant secondary metabolism. The polypeptide is Dirigent protein 15 (DIR15) (Arabidopsis thaliana (Mouse-ear cress)).